A 170-amino-acid chain; its full sequence is Small ribosomal subunit protein uS13m (170 aa).

Residues 130-170 (LKKKPTNRKERRIFNKIKKLQDKHNKQQQKNKKSKKWKTKK) form a disordered region. Composition is skewed to basic residues over residues 132 to 147 (KKPT…NKIK) and 155 to 170 (KQQQ…KTKK).

The protein belongs to the universal ribosomal protein uS13 family. In terms of assembly, part of the small ribosomal subunit.

The protein localises to the mitochondrion. In terms of biological role, located at the top of the head of the small subunit, it contacts several helices of the small subunit rRNA. The chain is Small ribosomal subunit protein uS13m (mrps13) from Dictyostelium citrinum (Slime mold).